The sequence spans 135 residues: DNA-binding protein inhibitor ID-2-B (135 aa).

In terms of domain architecture, bHLH spans 23–75 (ARSKAPVDEPMSLLYNMNDCYSKLKELVPSIPPNKKVSKMEILQHVIDYILDL). Residues 108 to 117 (LNTDISILSL) carry the Nuclear export signal motif.

In terms of assembly, heterodimer with other HLH proteins.

Its subcellular location is the cytoplasm. It is found in the nucleus. Transcriptional regulator (lacking a basic DNA binding domain) which negatively regulates the basic helix-loop-helix (bHLH) transcription factors by forming heterodimers and inhibiting their DNA binding and transcriptional activity. Inhibits the activity of both neurogenic (neurod1/neuroD) and myogenic (myod1/myoD) bHLH factors. May play a role in the regulation of the circadian clock. The sequence is that of DNA-binding protein inhibitor ID-2-B (id2-b) from Xenopus laevis (African clawed frog).